The following is a 378-amino-acid chain: Ferredoxin--NADP reductase, root isozyme 1, chloroplastic (378 aa).

The N-terminal 65 residues, 1–65 (MALSTTPSQM…KRSTICMSLQ (65 aa)), are a transit peptide targeting the chloroplast. One can recognise an FAD-binding FR-type domain in the interval 93-221 (KEPYTATIVS…TGPSGKVMLL (129 aa)). The cysteines at positions 196 and 201 are disulfide-linked. Ser-197 bears the Phosphoserine mark. Phosphothreonine is present on Thr-229. Position 231-249 (231-249 (IMIATGTGVAPYRGYLRRM)) interacts with NADP(+). Positions 349–373 (LKRVAEERGESWEQKLTQLRKNKQW) form a coiled coil.

It belongs to the ferredoxin--NADP reductase type 1 family. The cofactor is FAD. In terms of tissue distribution, expressed in shoots and roots. Less abundant in roots than RFNR2.

The protein localises to the plastid. The protein resides in the chloroplast. It catalyses the reaction 2 reduced [2Fe-2S]-[ferredoxin] + NADP(+) + H(+) = 2 oxidized [2Fe-2S]-[ferredoxin] + NADPH. Functionally, maintains the supply of reduced ferredoxin under non-photosynthetic conditions. This is Ferredoxin--NADP reductase, root isozyme 1, chloroplastic (RFNR1) from Arabidopsis thaliana (Mouse-ear cress).